Here is a 183-residue protein sequence, read N- to C-terminus: ATP synthase subunit b, chloroplastic (183 aa).

Residues 25 to 45 (DILATNLINLTVVVGVLIFFG) traverse the membrane as a helical segment.

It belongs to the ATPase B chain family. In terms of assembly, F-type ATPases have 2 components, F(1) - the catalytic core - and F(0) - the membrane proton channel. F(1) has five subunits: alpha(3), beta(3), gamma(1), delta(1), epsilon(1). F(0) has four main subunits: a(1), b(1), b'(1) and c(10-14). The alpha and beta chains form an alternating ring which encloses part of the gamma chain. F(1) is attached to F(0) by a central stalk formed by the gamma and epsilon chains, while a peripheral stalk is formed by the delta, b and b' chains.

It localises to the plastid. It is found in the chloroplast thylakoid membrane. Its function is as follows. F(1)F(0) ATP synthase produces ATP from ADP in the presence of a proton or sodium gradient. F-type ATPases consist of two structural domains, F(1) containing the extramembraneous catalytic core and F(0) containing the membrane proton channel, linked together by a central stalk and a peripheral stalk. During catalysis, ATP synthesis in the catalytic domain of F(1) is coupled via a rotary mechanism of the central stalk subunits to proton translocation. Functionally, component of the F(0) channel, it forms part of the peripheral stalk, linking F(1) to F(0). In Zea mays (Maize), this protein is ATP synthase subunit b, chloroplastic.